A 553-amino-acid polypeptide reads, in one-letter code: Hydroxylamine reductase (553 aa).

4 residues coordinate [4Fe-4S] cluster: Cys-3, Cys-6, Cys-15, and Cys-21. Positions 244, 268, 312, 406, 434, 459, 494, and 496 each coordinate hybrid [4Fe-2O-2S] cluster. Cys-406 bears the Cysteine persulfide mark.

This sequence belongs to the HCP family. Monomer. It depends on [4Fe-4S] cluster as a cofactor. The cofactor is hybrid [4Fe-2O-2S] cluster.

The protein resides in the cytoplasm. It carries out the reaction A + NH4(+) + H2O = hydroxylamine + AH2 + H(+). Catalyzes the reduction of hydroxylamine to form NH(3) and H(2)O. In Nitratidesulfovibrio vulgaris (strain ATCC 29579 / DSM 644 / CCUG 34227 / NCIMB 8303 / VKM B-1760 / Hildenborough) (Desulfovibrio vulgaris), this protein is Hydroxylamine reductase.